The chain runs to 288 residues: Energy-coupling factor transporter ATP-binding protein EcfA2 (288 aa).

Positions Ile-2–Gly-244 constitute an ABC transporter domain. Gly-39–Ser-46 contacts ATP. The active-site Proton acceptor is Glu-170.

It belongs to the ABC transporter superfamily. Energy-coupling factor EcfA family. Forms a stable energy-coupling factor (ECF) transporter complex composed of 2 membrane-embedded substrate-binding proteins (S component), 2 ATP-binding proteins (A component) and 2 transmembrane proteins (T component). In L.lactis forms a stable complex with EcfA' and EcfT and substrate-binding components. In E.coli forms a stable complex with EcfA, EcfT and individually with 3 tested substrate-binding components (BioY, NiaX and ThiT) with a stoichiometry of 1.1:1:1. The core ECF complex interacts with a number of substrate-specific binding components, including BioY, BioY2, HmpT, NiaX, PanT, QueT, RibU and ThiT.

It is found in the cell membrane. Functionally, ATP-binding (A) component of a common energy-coupling factor (ECF) ABC-transporter complex. Unlike classic ABC transporters this ECF transporter provides the energy necessary to transport a number of different substrates. In this organism these probably include biotin, thiamine precursor, niacin, pantothenic acid, queuosine precursor, riboflavin and thiamine. Uptake of niacin or riboflavin into proteosomes containing EcfA1A2T and Niax or RibU has been demonstrated. Uptake requires hydrolyzable Mg-ATP and is substrate-specific; NiaX-containing proteosomes did not transport riboflavin. The chain is Energy-coupling factor transporter ATP-binding protein EcfA2 from Lactococcus lactis subsp. cremoris (strain MG1363).